A 76-amino-acid polypeptide reads, in one-letter code: MRTFALLTAMLLLVALHAQAEARQARADEAAAQQQPGADDQGMAHSFTRPENAALPLSESARGLRCLCRRGVCQLL.

Residues 1–22 (MRTFALLTAMLLLVALHAQAEA) form the signal peptide. Positions 23–64 (RQARADEAAAQQQPGADDQGMAHSFTRPENAALPLSESARGL) are excised as a propeptide. Residues 25 to 54 (ARADEAAAQQQPGADDQGMAHSFTRPENAA) are disordered. Residues 30 to 44 (AAAQQQPGADDQGMA) show a composition bias toward low complexity. Arginine 65 is covalently cross-linked (Cyclopeptide (Arg-Cys) (interchain with C-73 in subunit A); in form RTD-1). Arginine 65 is covalently cross-linked (Cyclopeptide (Arg-Cys) (interchain with C-73 in subunit B); in form RTD-2). Cysteine 68 and cysteine 73 are disulfide-bonded. A Cyclopeptide (Cys-Arg) (interchain with R-65 in subunit A); in form RTD-1 cross-link involves residue cysteine 73. A Cyclopeptide (Cys-Arg) (interchain with R-65 in subunit B); in form RTD-2 cross-link involves residue cysteine 73. A propeptide spanning residues 74–76 (QLL) is cleaved from the precursor.

It belongs to the alpha-defensin family. Theta subfamily. As to quaternary structure, RTD-1 is a cyclic heterodimer composed of subunits A and B; disulfide-linked. RTD-2 is a cyclic homodimer composed of two subunits B; disulfide-linked. Forms a cyclic peptide with 1 subunit B (RTD-2) or with 1 subunit A (RTD-1). An additional intersubunit disulfide bond is formed. As to expression, RTD-1 is expressed in bone marrow. Detected in promyelocytes, myelocytes and mature neutrophils and monocytes.

Its function is as follows. RTD-1 and RTD-2 have similar antimicrobial activities against the Gram-positive bacteria S.aureus 502A and L.monocytogenes, the Gram-negative bacterium S.typhimurium, and the fungi C.albicans 16820 and C.neoformans 271A. RTD-2 is 2-3-fold less active than RTD-1 against E.coli ML35. The polypeptide is Rhesus theta defensin-1/2 subunit B (RTD1B) (Macaca mulatta (Rhesus macaque)).